A 412-amino-acid chain; its full sequence is Multifunctional CCA protein (412 aa).

The ATP site is built by G8 and R11. G8 and R11 together coordinate CTP. 2 residues coordinate Mg(2+): D21 and D23. Residues R91, R137, and R140 each coordinate ATP. Positions 91, 137, and 140 each coordinate CTP. Residues 228–329 (TGIHTLMTLS…VKLFDSIDAW (102 aa)) form the HD domain.

This sequence belongs to the tRNA nucleotidyltransferase/poly(A) polymerase family. Bacterial CCA-adding enzyme type 1 subfamily. Monomer. Can also form homodimers and oligomers. It depends on Mg(2+) as a cofactor. Ni(2+) serves as cofactor.

It carries out the reaction a tRNA precursor + 2 CTP + ATP = a tRNA with a 3' CCA end + 3 diphosphate. It catalyses the reaction a tRNA with a 3' CCA end + 2 CTP + ATP = a tRNA with a 3' CCACCA end + 3 diphosphate. Catalyzes the addition and repair of the essential 3'-terminal CCA sequence in tRNAs without using a nucleic acid template. Adds these three nucleotides in the order of C, C, and A to the tRNA nucleotide-73, using CTP and ATP as substrates and producing inorganic pyrophosphate. tRNA 3'-terminal CCA addition is required both for tRNA processing and repair. Also involved in tRNA surveillance by mediating tandem CCA addition to generate a CCACCA at the 3' terminus of unstable tRNAs. While stable tRNAs receive only 3'-terminal CCA, unstable tRNAs are marked with CCACCA and rapidly degraded. The protein is Multifunctional CCA protein of Escherichia coli (strain SE11).